Consider the following 682-residue polypeptide: Potassium-transporting ATPase ATP-binding subunit (682 aa).

The next 4 helical transmembrane spans lie at 34-54, 58-78, 219-239, and 254-274; these read PVMF…LAMV, IAGS…TVLF, IALT…TATL, and VLVA…LSAI. Asp307 functions as the 4-aspartylphosphate intermediate in the catalytic mechanism. ATP-binding positions include Asp344, Glu348, 377 to 384, and Lys395; that span reads FTAQSRMS. Asp518 and Asp522 together coordinate Mg(2+). Helical transmembrane passes span 588–608, 616–636, and 662–682; these read FAII…LNVM, AILS…PLAL, and LVVP…LGLA.

Belongs to the cation transport ATPase (P-type) (TC 3.A.3) family. Type IA subfamily. As to quaternary structure, the system is composed of three essential subunits: KdpA, KdpB and KdpC.

The protein resides in the cell inner membrane. It catalyses the reaction K(+)(out) + ATP + H2O = K(+)(in) + ADP + phosphate + H(+). Its function is as follows. Part of the high-affinity ATP-driven potassium transport (or Kdp) system, which catalyzes the hydrolysis of ATP coupled with the electrogenic transport of potassium into the cytoplasm. This subunit is responsible for energy coupling to the transport system and for the release of the potassium ions to the cytoplasm. In Salmonella typhimurium (strain LT2 / SGSC1412 / ATCC 700720), this protein is Potassium-transporting ATPase ATP-binding subunit.